Here is a 423-residue protein sequence, read N- to C-terminus: Core protease OPG082 (423 aa).

Residues His-241, Asp-248, and Cys-328 contribute to the active site.

Belongs to the peptidase C57 family.

The protein resides in the virion. Functionally, late protein responsible for processing most or all of the viral core and membrane proteins known to undergo morphogenesis-associated proteolysis. These proteolytic events are involved in the transformation of immature virions (IV) into mature virions (MV). Probably cleaves at least the OPG129, OPG136, OPG098, and OPG144 precursors preferentially at Ala-Gly-|-Ala motifs. Also seems to process Ala-Gly-|-Ser and Ala-Gly-|-Thr motifs. This chain is Core protease OPG082 (OPG083), found in Homo sapiens (Human).